We begin with the raw amino-acid sequence, 3033 residues long: Genome polyprotein (3033 aa).

S2 is subject to N-acetylserine; by host. The interval 2–23 is interaction with STAT1; sequence STNPKPQRKTKRNTNRRPQDVK. Positions 2 to 58 are interaction with EIF2AK2/PKR; the sequence is STNPKPQRKTKRNTNRRPQDVKFPGGGQIVGGVYLLPRRGPRLGVRATRKTSERSQP. The segment at 2-59 is interaction with DDX3X; the sequence is STNPKPQRKTKRNTNRRPQDVKFPGGGQIVGGVYLLPRRGPRLGVRATRKTSERSQPR. Positions 2 to 75 are disordered; the sequence is STNPKPQRKT…PKDRRSAGKS (74 aa). Residues 2 to 168 are Cytoplasmic-facing; sequence STNPKPQRKT…EDGINYATGN (167 aa). Short sequence motifs (nuclear localization signal) lie at residues 5–13 and 38–43; these read PKPQRKTKR and PRRGPR. The span at 7–16 shows a compositional bias: basic residues; the sequence is PQRKTKRNTN. Positions 32–47 are enriched in low complexity; sequence GGVYLLPRRGPRLGVR. A Phosphoserine; by host modification is found at S53. 2 consecutive short sequence motifs (nuclear localization signal) follow at residues 58-64 and 66-71; these read PRGRRQP and PKDRRS. Phosphoserine; by host occurs at positions 99 and 116. The segment at 112–152 is important for endoplasmic reticulum and mitochondrial localization; it reads PRHRSRNLGKVIDTLTCGFADLMGYIPVVGAPVGGVARALA. The tract at residues 122–173 is interaction with APOA2; the sequence is VIDTLTCGFADLMGYIPVVGAPVGGVARALAHGVRVLEDGINYATGNLPGCS. The tract at residues 164-167 is important for lipid droplets localization; that stretch reads YATG. The chain crosses the membrane as a helical span at residues 169 to 189; it reads LPGCSFSIFLLALLSCMSVPV. Positions 178 to 191 are cleaved as a propeptide — ER anchor for the core protein, removed in mature form by host signal peptidase; sequence LLALLSCMSVPVSA. The Lumenal portion of the chain corresponds to 190 to 358; that stretch reads SAVEVKNTSQ…TGAHWGVMFG (169 aa). N196, N209, and N234 each carry an N-linked (GlcNAc...) asparagine; by host glycan. Residues 265-296 form an important for fusion region; the sequence is IVVSATFCSALYIGDVCGAIMIAAQATIISPQ. The N-linked (GlcNAc...) asparagine; by host glycan is linked to N305. The helical transmembrane segment at 359 to 379 threads the bilayer; that stretch reads LAYFSMQGAWAKVVVILLLTA. Residues 380-729 are Lumenal-facing; that stretch reads GVDAQTHTIS…WEWVVLLFLL (350 aa). An HVR1 region spans residues 385–412; sequence THTISGHAARTTHGLVSLFTPGSQQNIQ. N-linked (GlcNAc...) (high mannose) asparagine; by host glycans are attached at residues N417, N423, and N430. 4 disulfide bridges follow: C429–C554, C452–C459, C488–C496, and C505–C510. N-linked (GlcNAc...) asparagine; by host glycosylation occurs at N448. Positions 475–480 are HVR2; it reads EENVTN. N477 carries N-linked (GlcNAc...) asparagine; by host glycosylation. The interval 482-495 is CD81-binding 1; the sequence is DNMRPYCWHYPPRP. N534 carries an N-linked (GlcNAc...) asparagine; by host glycan. The interval 546-553 is CD81-binding 2; the sequence is PPRGAWFG. N558 carries an N-linked (GlcNAc...) asparagine; by host glycan. Disulfide bonds link C566-C571, C585-C589, C601-C624, and C611-C648. N627 and N649 each carry an N-linked (GlcNAc...) (high mannose) asparagine; by host glycan. Cysteines 656 and 681 form a disulfide. The PKR/eIF2-alpha phosphorylation homology domain (PePHD) stretch occupies residues 664-675; sequence SQLSPLLHSTTE. The chain crosses the membrane as a helical span at residues 730 to 750; the sequence is LADARVCACLWMLLLLGQAEA. Over 751–761 the chain is Lumenal; the sequence is ALEKLVILHAA. Residues 762–782 traverse the membrane as a helical segment; it reads SAASSHGMLCFIIFFIAAWYI. Residues 783-786 lie on the Cytoplasmic side of the membrane; it reads KGRV. Residues 787–807 traverse the membrane as a helical segment; sequence TPLVTYSYLGMWSFSLLLLAL. The Lumenal portion of the chain corresponds to 808–817; it reads PQQAYALDTT. Residues 818-838 form a helical membrane-spanning segment; the sequence is EQGQIGLVLLVVISVFTLSPA. The Cytoplasmic portion of the chain corresponds to 839 to 885; sequence YKILLCRSLWWLSYLLVRAEALIQDWVPPWQARGGRDGIIWAATIFC. Residues 886-906 form a helical membrane-spanning segment; that stretch reads PGVLFDITNWLLAILGPGYLL. The 128-residue stretch at 903–1030 folds into the Peptidase C18 domain; sequence GYLLRSVLTS…EYTSKGWKLL (128 aa). The Lumenal portion of the chain corresponds to 907-932; it reads RSVLTSTPYFVRAQALLRICAAVRHL. The interval 908–1210 is protease NS2-3; that stretch reads SVLTSTPYFV…PIESLDVIIR (303 aa). The S-palmitoyl cysteine; by host moiety is linked to residue C926. A helical membrane pass occupies residues 933-953; the sequence is SGGKYVQMMLLTLGKWTGTYI. The interaction with host SCPS1 stretch occupies residues 933–953; the sequence is SGGKYVQMMLLTLGKWTGTYI. The Cytoplasmic portion of the chain corresponds to 954–1661; the sequence is YDHLSPMSGW…CMQADLEIMT (708 aa). Residues H956, E976, and C997 each act as for protease NS2 activity; shared with dimeric partner in the active site. The Peptidase S29 domain maps to 1031–1212; the sequence is APITAYAQQT…ESLDVIIRSP (182 aa). Catalysis depends on charge relay system; for serine protease NS3 activity residues H1087 and D1111. The Zn(2+) site is built by C1127 and C1129. The active-site Charge relay system; for serine protease NS3 activity is the S1169. Residues C1175 and H1179 each coordinate Zn(2+). A Helicase ATP-binding domain is found at 1221-1373; the sequence is PAVPQTYQVG…PNIEEVALGH (153 aa). 1234-1241 contacts ATP; the sequence is APTGSGKS. Mg(2+) contacts are provided by S1241 and E1321. The short motif at 1320 to 1323 is the DECH box element; it reads DECH. The segment at 1490-1502 is RNA-binding; that stretch reads QRRGRTGRGRLGI. A helical transmembrane segment spans residues 1662-1682; the sequence is STWVLAGGVLAAIAAYCLATG. Residues 1683–1694 are NS3-binding; sequence CVVCIGRVNINQ. The Cytoplasmic portion of the chain corresponds to 1683–1809; it reads CVVCIGRVNI…ALTSPLPTST (127 aa). The chain crosses the membrane as a helical span at residues 1810-1830; that stretch reads TILLNIMGGWLASQIAPAAGA. Residues 1831–1832 are Lumenal-facing; that stretch reads TG. Residues 1833–1853 form a helical membrane-spanning segment; the sequence is FVVSGLVGAAVGSIGLGKILV. D1854 is a topological domain (cytoplasmic). Residues 1855-1875 traverse the membrane as a helical segment; it reads VLAGYGAGISGALVAFKIMSG. Residues 1876 to 1885 lie on the Lumenal side of the membrane; it reads EKPSVEDVVN. Residues 1886–1906 form a helical membrane-spanning segment; sequence LLPGILSPGALVVGVICAAIL. Residues 1907–1976 lie on the Cytoplasmic side of the membrane; that stretch reads RRHVGQGEGA…WITEDCPVPC (70 aa). C1976 is lipidated: S-palmitoyl cysteine; by host. An intramembrane segment occupies 1977 to 2007; the sequence is AGSWLRDIWDWACTILTDFKNWLSTKLLPKM. The Cytoplasmic portion of the chain corresponds to 2008 to 3012; that stretch reads PGLPFISCQR…YHSVSRARPR (1005 aa). Residues C2015, C2033, C2035, and C2056 each contribute to the Zn(2+) site. The tract at residues 2124–2212 is FKBP8-binding; that stretch reads EFFSWVDGVQ…ASSSASQLSA (89 aa). The transcriptional activation stretch occupies residues 2124 to 2332; that stretch reads EFFSWVDGVQ…PTPPPRRRRA (209 aa). The interaction with non-structural protein 4A stretch occupies residues 2139–2143; the sequence is PTPKP. A disordered region spans residues 2193–2212; sequence RLARGSPPSEASSSASQLSA. Residues 2193-2460 form an interaction with host SKP2 region; it reads RLARGSPPSE…ALITPCGPEE (268 aa). Residues S2198, S2201, S2205, S2208, S2211, and S2214 each carry the phosphoserine; by host modification. Residues 2198–2212 show a composition bias toward low complexity; sequence SPPSEASSSASQLSA. The interval 2214–2249 is ISDR; the sequence is SLRATCTAHAKNYAVEMVDANFFMGSDVTRIESETK. The interaction with EIF2AK2/PKR stretch occupies residues 2214 to 2275; it reads SLRATCTAHA…REPSVPSEYL (62 aa). The NS4B-binding stretch occupies residues 2249-2306; sequence KVLILDSLDPSVEEEDEREPSVPSEYLLPKKKFPQALPVWARPDYNPPVVETWKRPDY. Positions 2299 to 2376 are V3; the sequence is ETWKRPDYDP…MDTTDATDQP (78 aa). The interval 2308–2328 is disordered; the sequence is PPTVSGCALPPRVTAPTPPPR. Positions 2322-2325 match the SH3-binding motif; sequence APTP. Positions 2327 to 2335 match the Nuclear localization signal motif; that stretch reads PRRRRALVL. A Glycyl lysine isopeptide (Lys-Gly) (interchain with G-Cter in ubiquitin) cross-link involves residue K2350. Residues 2353–2431 are disordered; sequence GQLPPSCDSG…PDLDSGSWST (79 aa). A compositionally biased stretch (polar residues) spans 2361–2373; it reads SGRSTGMDTTDAT. A phosphoserine; by host mark is found at S2471 and S2484. Residues 2656-2774 enclose the RdRp catalytic domain; it reads PMGFSYDTRC…ISESQGAEED (119 aa). Mg(2+) contacts are provided by D2662, D2760, and D2761. Residues 3013-3033 form a helical membrane-spanning segment; the sequence is FLLLCLLLLSVGVGIFLLPAR.

This sequence belongs to the hepacivirus polyprotein family. Homooligomer. Interacts with E1 (via C-terminus). Interacts with the non-structural protein 5A. Interacts (via N-terminus) with host STAT1 (via SH2 domain); this interaction results in decreased STAT1 phosphorylation and ubiquitin-mediated proteasome-dependent STAT1 degradation, leading to decreased IFN-stimulated gene transcription. Interacts with host STAT3; this interaction constitutively activates STAT3. Interacts with host LTBR receptor. Interacts with host TNFRSF1A receptor and possibly induces apoptosis. Interacts with host HNRPK. Interacts with host YWHAE. Interacts with host UBE3A/E6AP. Interacts with host DDX3X. Interacts with host APOA2. Interacts with host RXRA protein. Interacts with host SP110 isoform 3/Sp110b; this interaction sequesters the transcriptional corepressor SP110 away from the nucleus. Interacts with host CREB3 nuclear transcription protein; this interaction triggers cell transformation. Interacts with host ACY3. Interacts with host C1QR1. Interacts with host RBM24; this interaction, which enhances the interaction of the mature core protein with 5'-UTR, may inhibit viral translation and favor replication. Interacts with host EIF2AK2/PKR; this interaction induces the autophosphorylation of EIF2AK2. Part of the viral assembly initiation complex composed of NS2, E1, E2, NS3, NS4A, NS5A and the mature core protein. As to quaternary structure, forms a heterodimer with envelope glycoprotein E2. Interacts with mature core protein. Interacts with protease NS2. The heterodimer E1/E2 interacts with host CLDN1; this interaction plays a role in viral entry into host cell. Interacts with host SPSB2 (via C-terminus). Part of the viral assembly initiation complex composed of NS2, E1, E2, NS3, NS4A, NS5A and the mature core protein. Interacts with host NEURL3; this interaction prevents E1 binding to glycoprotein E2. In terms of assembly, forms a heterodimer with envelope glycoprotein E1. Interacts with host CD81 and SCARB1 receptors; these interactions play a role in viral entry into host cell. Interacts with host EIF2AK2/PKR; this interaction inhibits EIF2AK2 and probably allows the virus to evade the innate immune response. Interacts with host CD209/DC-SIGN and CLEC4M/DC-SIGNR. Interact with host SPCS1; this interaction is essential for viral particle assembly. Interacts with protease NS2. The heterodimer E1/E2 interacts with host CLDN1; this interaction plays a role in viral entry into host cell. Part of the viral assembly initiation complex composed of NS2, E1, E2, NS3, NS4A, NS5A and the mature core protein. Interacts with host SLC3A2/4F2hc; the interaction may facilitate viral entry into host cell. Interacts with human PLSCR1. Homohexamer. Homoheptamer. Interacts with protease NS2. As to quaternary structure, homodimer. Interacts with host SPCS1; this interaction is essential for viral particle assembly. Interacts with envelope glycoprotein E1. Interacts with envelope glycoprotein E2. Interacts with viroporin p7. Interacts with serine protease/helicase NS3. Part of the replication complex composed of NS2, NS3, NS4A, NS4B, NS5A and the RNA-directed RNA polymerase embedded in an ER-derived membranous web. Part of the viral assembly initiation complex composed of NS2, E1, E2, NS3, NS4A, NS5A and the mature core protein. In terms of assembly, interacts with protease NS2. Interacts with non-structural protein 4A; this interaction stabilizes the folding of NS3 serine protease. NS3-NS4A interaction is essential for NS3 activation and allows membrane anchorage of the latter. NS3/NS4A complex also prevents phosphorylation of host IRF3, thus preventing the establishment of dsRNA induced antiviral state. Interacts with host MAVS; this interaction leads to the cleavage and inhibition of host MAVS. Interacts with host TICAM1; this interaction leads to the cleavage and inhibition of host TICAM1. Interacts with host TANK-binding kinase/TBK1; this interaction results in the inhibition of the association between TBK1 and IRF3, which leads to the inhibition of IRF3 activation. Interacts with host RBM24. Part of the replication complex composed of NS2, NS3, NS4A, NS4B, NS5A and the RNA-directed RNA polymerase embedded in an ER-derived membranous web. Part of the viral assembly initiation complex composed of NS2, E1, E2, NS3, NS4A, NS5A and the mature core protein. Interacts with NS3 serine protease; this interaction stabilizes the folding of NS3 serine protease. NS3-NS4A interaction is essential for NS3 activation and allows membrane anchorage of the latter. Interacts with non-structural protein 5A (via N-terminus). Part of the replication complex composed of NS2, NS3, NS4A, NS4B, NS5A and the RNA-directed RNA polymerase embedded in an ER-derived membranous web. Part of the viral assembly initiation complex composed of NS2, E1, E2, NS3, NS4A, NS5A and the mature core protein. As to quaternary structure, homomultimer. Interacts with non-structural protein NS5A. Interacts with host PLA2G4C; this interaction likely initiates the recruitment of replication complexes to lipid droplets. Interacts with host STING; this interaction disrupts the interaction between STING and TBK1 thereby suppressing the interferon signaling. Part of the replication complex composed of NS2, NS3, NS4A, NS4B, NS5A and the RNA-directed RNA polymerase embedded in an ER-derived membranous web. In terms of assembly, monomer. Homodimer; dimerization is required for RNA-binding. Interacts with the mature core protein. Interacts (via N-terminus) with non-structural protein 4A. Interacts with non-structural protein 4B. Interacts (via region D2) with RNA-directed RNA polymerase. Part of the viral assembly initiation complex composed of NS2, E1, E2, NS3, NS4A, NS5A and the mature core protein. Part of the replication complex composed of NS2, NS3, NS4A, NS4B, NS5A and the RNA-directed RNA polymerase embedded in an ER-derived membranous web. Interacts with host GRB2. Interacts with host BIN1. Interacts with host PIK3R1. Interacts with host SRCAP. Interacts with host FKBP8. Interacts (via C-terminus) with host VAPB (via MSP domain). Interacts with host EIF2AK2/PKR; this interaction leads to disruption of EIF2AK2 dimerization by NS5A and probably allows the virus to evade the innate immune response. Interacts (via N-terminus) with host PACSIN2 (via N-terminus); this interaction attenuates protein kinase C alpha-mediated phosphorylation of PACSIN2 by disrupting the interaction between PACSIN2 and PRKCA. Interacts (via N-terminus) with host SRC kinase (via SH2 domain). Interacts with most Src-family kinases. Interacts with host IFI27 and SKP2; promotes the ubiquitin-mediated proteasomal degradation of NS5A. Interacts with host GPS2. Interacts with host TNFRSF21; this interaction allows the modulation by the virus of JNK, p38 MAPK, STAT3, and Akt signaling pathways in a DR6-dependent manner. Interacts (via N-terminus) with host CIDEB (via N-terminus); this interaction seems to regulate the association of HCV particles with APOE. Interacts with host CHKA/Choline Kinase-alpha; CHKA bridges host PI4KA and NS5A and potentiates NS5A-stimulated PI4KA activity, which then facilitates the targeting of the ternary complex to the ER for viral replication. Interacts with host SPSB2 (via C-terminus); this interaction targets NS5A for ubiquitination and degradation. Interacts with host RAB18; this interaction may promote the association of NS5A and other replicase components with lipid droplets. Interacts (via region D2) with host PPIA/CYPA; the interaction stimulates RNA-binding ability of NS5A and is dependent on the peptidyl-prolyl cis-trans isomerase activity of PPIA/CYPA. Interacts with host TRIM14; this interaction induces the degradation of NS5A. Homooligomer. Interacts with non-structural protein 5A. Interacts with host VAPB. Interacts with host PRK2/PKN2. Interacts with host HNRNPA1 and SEPT6; these interactions facilitate viral replication. Part of the replication complex composed of NS2, NS3, NS4A, NS4B, NS5A and the RNA-directed RNA polymerase. It depends on Zn(2+) as a cofactor. Mg(2+) serves as cofactor. Specific enzymatic cleavages in vivo yield mature proteins. The structural proteins, core, E1, E2 and p7 are produced by proteolytic processing by host signal peptidases. The core protein precursor is synthesized as a 23 kDa, which is retained in the ER membrane through the hydrophobic signal peptide. Cleavage by the signal peptidase releases the 21 kDa mature core protein. The cleavage of the core protein precursor occurs between aminoacids 176 and 188 but the exact cleavage site is not known. Some degraded forms of the core protein appear as well during the course of infection. The other proteins (p7, NS2, NS3, NS4A, NS4B, NS5A and NS5B) are cleaved by the viral proteases. Autoprocessing between NS2 and NS3 is mediated by the NS2 cysteine protease catalytic domain and regulated by the NS3 N-terminal domain. Post-translationally, phosphorylated by host PKC and PKA. In terms of processing, ubiquitinated; mediated by UBE3A and leading to core protein subsequent proteasomal degradation. Highly N-glycosylated. Post-translationally, palmitoylation is required for NS2/3 autoprocessing and E2 recruitment to membranes. In terms of processing, palmitoylated. This modification may play a role in its polymerization or in protein-protein interactions. Phosphorylated on serines in a basal form termed p56. p58 is a hyperphosphorylated form of p56. p56 and p58 coexist in the cell in roughly equivalent amounts. Hyperphosphorylation is dependent on the presence of NS4A. Host CSNK1A1/CKI-alpha or RPS6KB1 kinases may be responsible for NS5A phosphorylation. Post-translationally, tyrosine phosphorylation is essential for the interaction with host SRC. In terms of processing, ubiquitinated. Ubiquitination, most probably at Lys-2350, mediated by host IFI27 and SKP2 leads to proteasomal degradation, restricting viral infection. Ubiquitination by host TRIM22 leads to interruption of viral replication. The N-terminus is phosphorylated by host PRK2/PKN2.

It is found in the host endoplasmic reticulum membrane. The protein resides in the host mitochondrion membrane. Its subcellular location is the virion. It localises to the host cytoplasm. The protein localises to the host nucleus. It is found in the host lipid droplet. The protein resides in the virion membrane. Its subcellular location is the host mitochondrion. It localises to the host cell membrane. The protein localises to the host perinuclear region. The enzyme catalyses Hydrolysis of four peptide bonds in the viral precursor polyprotein, commonly with Asp or Glu in the P6 position, Cys or Thr in P1 and Ser or Ala in P1'.. It catalyses the reaction a ribonucleoside 5'-triphosphate + H2O = a ribonucleoside 5'-diphosphate + phosphate + H(+). It carries out the reaction ATP + H2O = ADP + phosphate + H(+). The catalysed reaction is RNA(n) + a ribonucleoside 5'-triphosphate = RNA(n+1) + diphosphate. Its activity is regulated as follows. Inhibited by the antiviral drug hexamethylene amiloride. Inhibition by amantadine appears to be genotype-dependent. Also inhibited by long-alkyl-chain iminosugar derivatives. Activity is up-regulated by PRK2/PKN2-mediated phosphorylation. Packages viral RNA to form a viral nucleocapsid, and promotes virion budding. Participates in the viral particle production as a result of its interaction with the non-structural protein 5A. Binds RNA and may function as a RNA chaperone to induce the RNA structural rearrangements taking place during virus replication. Modulates viral translation initiation by interacting with viral IRES and 40S ribosomal subunit. Affects various cell signaling pathways, host immunity and lipid metabolism. Prevents the establishment of cellular antiviral state by blocking the interferon-alpha/beta (IFN-alpha/beta) and IFN-gamma signaling pathways and by blocking the formation of phosphorylated STAT1 and promoting ubiquitin-mediated proteasome-dependent degradation of STAT1. Activates STAT3 leading to cellular transformation. Regulates the activity of cellular genes, including c-myc and c-fos. May repress the promoter of p53, and sequester CREB3 and SP110 isoform 3/Sp110b in the cytoplasm. Represses cell cycle negative regulating factor CDKN1A, thereby interrupting an important check point of normal cell cycle regulation. Targets transcription factors involved in the regulation of inflammatory responses and in the immune response: suppresses TNF-induced NF-kappa-B activation, and activates AP-1. Binds to dendritic cells (DCs) via C1QR1, resulting in down-regulation of T-lymphocytes proliferation. Alters lipid metabolism by interacting with hepatocellular proteins involved in lipid accumulation and storage. Induces up-regulation of FAS promoter activity, and thereby contributes to the increased triglyceride accumulation in hepatocytes (steatosis). Its function is as follows. Forms a heterodimer with envelope glycoprotein E2, which mediates virus attachment to the host cell, virion internalization through clathrin-dependent endocytosis and fusion with host membrane. Fusion with the host cell is most likely mediated by both E1 and E2, through conformational rearrangements of the heterodimer required for fusion rather than a classical class II fusion mechanism. E1/E2 heterodimer binds host apolipoproteins such as APOB and ApoE thereby forming a lipo-viro-particle (LVP). APOE associated to the LVP allows the initial virus attachment to cell surface receptors such as the heparan sulfate proteoglycans (HSPGs), syndecan-1 (SDC1), syndecan-1 (SDC2), the low-density lipoprotein receptor (LDLR) and scavenger receptor class B type I (SCARB1). The cholesterol transfer activity of SCARB1 allows E2 exposure and binding of E2 to SCARB1 and the tetraspanin CD81. E1/E2 heterodimer binding on CD81 activates the epithelial growth factor receptor (EGFR) signaling pathway. Diffusion of the complex E1-E2-EGFR-SCARB1-CD81 to the cell lateral membrane allows further interaction with Claudin 1 (CLDN1) and occludin (OCLN) to finally trigger HCV entry. In terms of biological role, forms a heterodimer with envelope glycoprotein E1, which mediates virus attachment to the host cell, virion internalization through clathrin-dependent endocytosis and fusion with host membrane. Fusion with the host cell is most likely mediated by both E1 and E2, through conformational rearrangements of the heterodimer required for fusion rather than a classical class II fusion mechanism. The interaction between envelope glycoprotein E2 and host apolipoprotein E/APOE allows the proper assembly, maturation and infectivity of the viral particles. This interaction is probably promoted via the up-regulation of cellular autophagy by the virus. E1/E2 heterodimer binds host apolipoproteins such as APOB and APOE thereby forming a lipo-viro-particle (LVP). APOE associated to the LVP allows the initial virus attachment to cell surface receptors such as the heparan sulfate proteoglycans (HSPGs), syndecan-1 (SDC1), syndecan-1 (SDC2), the low-density lipoprotein receptor (LDLR) and scavenger receptor class B type I (SCARB1). The cholesterol transfer activity of SCARB1 allows E2 exposure and binding of E2 to SCARB1 and the tetraspanin CD81. E1/E2 heterodimer binding on CD81 activates the epithelial growth factor receptor (EGFR) signaling pathway. Diffusion of the complex E1-E2-EGFR-SCARB1-CD81 to the cell lateral membrane allows further interaction with Claudin 1 (CLDN1) and occludin (OCLN) to finally trigger HCV entry. Inhibits host EIF2AK2/PKR activation, preventing the establishment of an antiviral state. Viral ligand for CD209/DC-SIGN and CLEC4M/DC-SIGNR, which are respectively found on dendritic cells (DCs), and on liver sinusoidal endothelial cells and macrophage-like cells of lymph node sinuses. These interactions allow the capture of circulating HCV particles by these cells and subsequent facilitated transmission to permissive cells such as hepatocytes and lymphocyte subpopulations. The interaction between E2 and host amino acid transporter complex formed by SLC3A2 and SLC7A5/LAT1 may facilitate viral entry into host cell. Functionally, ion channel protein that acts as a viroporin and plays an essential role in the assembly, envelopment and secretion of viral particles. Regulates the host cell secretory pathway, which induces the intracellular retention of viral glycoproteins and favors assembly of viral particles. Creates a pore in acidic organelles and releases Ca(2+) and H(+) in the cytoplasm of infected cells, leading to a productive viral infection. High levels of cytoplasmic Ca(2+) may trigger membrane trafficking and transport of viral ER-associated proteins to viroplasms, sites of viral genome replication. This ionic imbalance induces the assembly of the inflammasome complex, which triggers the maturation of pro-IL-1beta into IL-1beta through the action of caspase-1. Targets also host mitochondria and induces mitochondrial depolarization. In addition of its role as a viroporin, acts as a lipid raft adhesion factor. Cysteine protease required for the proteolytic auto-cleavage between the non-structural proteins NS2 and NS3. The N-terminus of NS3 is required for the function of NS2 protease (active region NS2-3). Promotes the initiation of viral particle assembly by mediating the interaction between structural and non-structural proteins. Its function is as follows. Displays three enzymatic activities: serine protease with a chymotrypsin-like fold, NTPase and RNA helicase. NS3 serine protease, in association with NS4A, is responsible for the cleavages of NS3-NS4A, NS4A-NS4B, NS4B-NS5A and NS5A-NS5B. The NS3/NS4A complex prevents phosphorylation of host IRF3, thus preventing the establishment of dsRNA induced antiviral state. The NS3/NS4A complex induces host amino acid transporter component SLC3A2, thus contributing to HCV propagation. NS3 RNA helicase binds to RNA and unwinds both dsDNA and dsRNA in the 3' to 5' direction, and likely resolves RNA complicated stable secondary structures in the template strand. Binds a single ATP and catalyzes the unzipping of a single base pair of dsRNA. Inhibits host antiviral proteins TBK1 and IRF3 thereby preventing the establishment of an antiviral state. Cleaves host MAVS/CARDIF thereby preventing the establishment of an antiviral state. Cleaves host TICAM1/TRIF, thereby disrupting TLR3 signaling and preventing the establishment of an antiviral state. In terms of biological role, peptide cofactor which forms a non-covalent complex with the N-terminal of NS3 serine protease. The NS3/NS4A complex prevents phosphorylation of host IRF3, thus preventing the establishment of dsRNA induced antiviral state. The NS3/NS4A complex induces host amino acid transporter component SLC3A2, thus contributing to HCV propagation. Functionally, induces a specific membrane alteration that serves as a scaffold for the virus replication complex. This membrane alteration gives rise to the so-called ER-derived membranous web that contains the replication complex. NS4B self-interaction contributes to its function in membranous web formation. Promotes host TRIF protein degradation in a CASP8-dependent manner thereby inhibiting host TLR3-mediated interferon signaling. Disrupts the interaction between STING and TBK1 contributing to the inhibition of interferon signaling. Phosphorylated protein that is indispensable for viral replication and assembly. Both hypo- and hyperphosphorylated states are required for the viral life cycle. The hyperphosphorylated form of NS5A is an inhibitor of viral replication. Involved in RNA-binding and especially in binding to the viral genome. Zinc is essential for RNA-binding. Participates in the viral particle production as a result of its interaction with the mature viral core protein. Its interaction with host VAPB may target the viral replication complex to vesicles. Down-regulates viral IRES translation initiation. Mediates interferon resistance, presumably by interacting with and inhibiting host EIF2AK2/PKR. Prevents BIN1-induced apoptosis. Acts as a transcriptional activator of some host genes important for viral replication when localized in the nucleus. Via the interaction with host PACSIN2, modulates lipid droplet formation in order to promote virion assembly. Modulates TNFRSF21/DR6 signaling pathway for viral propagation. Its function is as follows. RNA-dependent RNA polymerase that performs primer-template recognition and RNA synthesis during viral replication. Initiates RNA transcription/replication at a flavin adenine dinucleotide (FAD), resulting in a 5'- FAD cap on viral RNAs. In this way, recognition of viral 5' RNA by host pattern recognition receptors can be bypassed, thereby evading activation of antiviral pathways. This is Genome polyprotein from Hepatitis C virus genotype 2k (isolate VAT96) (HCV).